Reading from the N-terminus, the 110-residue chain is MSGAHHLTPPTDYGKPVLAASIGISLALLVYTATRSTLPHVGDNLHALPHGGRYVDGTKSISYFSPSASKTRDPFPFAFLLILTLSGLILLLSRRRSNPHSCPSCGTPHA.

The Cytoplasmic segment spans residues 1–10 (MSGAHHLTPP). A helical membrane pass occupies residues 11-34 (TDYGKPVLAASIGISLALLVYTAT). At 35 to 76 (RSTLPHVGDNLHALPHGGRYVDGTKSISYFSPSASKTRDPFP) the chain is on the lumenal side. Residues 77 to 92 (FAFLLILTLSGLILLL) form a helical membrane-spanning segment. Over 93-110 (SRRRSNPHSCPSCGTPHA) the chain is Cytoplasmic.

This sequence belongs to the Tymovirales TGBp2 protein family.

Its subcellular location is the host endoplasmic reticulum membrane. Plays a role in viral cell-to-cell propagation, by facilitating genome transport to neighboring plant cells through plasmosdesmata,. In Plantago asiatica (P1AMV), this protein is Movement protein TGB2.